The chain runs to 66 residues: Large ribosomal subunit protein uL29 (66 aa).

The protein belongs to the universal ribosomal protein uL29 family.

The polypeptide is Large ribosomal subunit protein uL29 (Mesorhizobium japonicum (strain LMG 29417 / CECT 9101 / MAFF 303099) (Mesorhizobium loti (strain MAFF 303099))).